We begin with the raw amino-acid sequence, 321 residues long: uncharacterized protein (321 aa).

Residues 1–80 (MQGGQEVGRE…GELSGGWGEF (80 aa)) are disordered.

This is an uncharacterized protein from Mus musculus (Mouse).